Reading from the N-terminus, the 211-residue chain is Holliday junction branch migration complex subunit RuvA (211 aa).

Residues 1–70 (MIQFLQGQVV…QDQIALFGFG (70 aa)) form a domain I region. The segment at 71-149 (RLAERDLFGQ…QWHKLQMGTG (79 aa)) is domain II. A flexible linker region spans residues 150–158 (ETDSTLPTT). A domain III region spans residues 158-211 (TALLEDLEMTLLALGYTQTEIQQAIAMVSQVPDVAQSEDPEVWIRQAIGWLSDH).

It belongs to the RuvA family. As to quaternary structure, homotetramer. Forms an RuvA(8)-RuvB(12)-Holliday junction (HJ) complex. HJ DNA is sandwiched between 2 RuvA tetramers; dsDNA enters through RuvA and exits via RuvB. An RuvB hexamer assembles on each DNA strand where it exits the tetramer. Each RuvB hexamer is contacted by two RuvA subunits (via domain III) on 2 adjacent RuvB subunits; this complex drives branch migration. In the full resolvosome a probable DNA-RuvA(4)-RuvB(12)-RuvC(2) complex forms which resolves the HJ.

It localises to the cytoplasm. Functionally, the RuvA-RuvB-RuvC complex processes Holliday junction (HJ) DNA during genetic recombination and DNA repair, while the RuvA-RuvB complex plays an important role in the rescue of blocked DNA replication forks via replication fork reversal (RFR). RuvA specifically binds to HJ cruciform DNA, conferring on it an open structure. The RuvB hexamer acts as an ATP-dependent pump, pulling dsDNA into and through the RuvAB complex. HJ branch migration allows RuvC to scan DNA until it finds its consensus sequence, where it cleaves and resolves the cruciform DNA. The polypeptide is Holliday junction branch migration complex subunit RuvA (Synechocystis sp. (strain ATCC 27184 / PCC 6803 / Kazusa)).